The primary structure comprises 163 residues: Shikimate kinase (163 aa).

10–15 (GVGKTT) lines the ATP pocket. Residue T14 coordinates Mg(2+). Residues D28, R52, and G75 each contribute to the substrate site. R116 serves as a coordination point for ATP. Position 134 (R134) interacts with substrate. R151 contributes to the ATP binding site.

It belongs to the shikimate kinase family. As to quaternary structure, monomer. It depends on Mg(2+) as a cofactor.

The protein resides in the cytoplasm. It carries out the reaction shikimate + ATP = 3-phosphoshikimate + ADP + H(+). It participates in metabolic intermediate biosynthesis; chorismate biosynthesis; chorismate from D-erythrose 4-phosphate and phosphoenolpyruvate: step 5/7. In terms of biological role, catalyzes the specific phosphorylation of the 3-hydroxyl group of shikimic acid using ATP as a cosubstrate. The chain is Shikimate kinase from Streptococcus pyogenes serotype M49 (strain NZ131).